The following is a 579-amino-acid chain: Zinc finger protein 248 (579 aa).

Residues Val8–Pro79 enclose the KRAB domain. The segment at Thr240 to His264 adopts a C2H2-type 1; degenerate zinc-finger fold. Lys341 participates in a covalent cross-link: Glycyl lysine isopeptide (Lys-Gly) (interchain with G-Cter in SUMO2). 7 consecutive C2H2-type zinc fingers follow at residues Phe380–His402, Tyr408–His430, Tyr436–His458, Tyr464–His486, Phe492–His514, Tyr520–Thr543, and Tyr548–His570.

This sequence belongs to the krueppel C2H2-type zinc-finger protein family.

It localises to the nucleus. May be involved in transcriptional regulation. This chain is Zinc finger protein 248 (ZNF248), found in Homo sapiens (Human).